The following is a 155-amino-acid chain: Large ribosomal subunit protein uL15 (155 aa).

The span at 1–13 (MKLNELRDCEGAT) shows a compositional bias: basic and acidic residues. A disordered region spans residues 1 to 47 (MKLNELRDCEGATKNRKRIGRGIGSGTGKTGGRGVKGQKSRSGVSLN). Residues 21–35 (RGIGSGTGKTGGRGV) show a composition bias toward gly residues.

It belongs to the universal ribosomal protein uL15 family. Part of the 50S ribosomal subunit.

Functionally, binds to the 23S rRNA. The polypeptide is Large ribosomal subunit protein uL15 (Bartonella tribocorum (strain CIP 105476 / IBS 506)).